The primary structure comprises 240 residues: MTGKPAYKRVLLKASGEALMGSQGFGIDVSVADRIANDIKQARALGVEVGVVIGGGNIFRGVAVASKGGDRVTGDHMGMLATVINSLALRTSLHKIGVDSVVLSAIAMPEICESFSQRQATAYMDEGKVVIFAGGTGNPFFTTDSAAALRAAEIEADALLKGTQVDGIYSADPKKDPGATRFEQLTHEEVLDRGLAVMDTAAVALARENNILIIVYSIHENGGLADILQGKGRCTIVSDN.

13–16 (KASG) is an ATP binding site. The interval 21–26 (GSQGFG) is involved in allosteric activation by GTP. Gly-55 lines the UMP pocket. Gly-56 and Arg-60 together coordinate ATP. UMP contacts are provided by residues Asp-75 and 136–143 (TGNPFFTT). The ATP site is built by Thr-163, Gln-164, Tyr-169, and Asp-172.

The protein belongs to the UMP kinase family. In terms of assembly, homohexamer.

Its subcellular location is the cytoplasm. The enzyme catalyses UMP + ATP = UDP + ADP. The protein operates within pyrimidine metabolism; CTP biosynthesis via de novo pathway; UDP from UMP (UMPK route): step 1/1. With respect to regulation, allosterically activated by GTP. Inhibited by UTP. In terms of biological role, catalyzes the reversible phosphorylation of UMP to UDP. The chain is Uridylate kinase from Brucella melitensis biotype 1 (strain ATCC 23456 / CCUG 17765 / NCTC 10094 / 16M).